We begin with the raw amino-acid sequence, 458 residues long: MSQSSASSIFTVSRLNQTVRELLEREMGQIWLTAEISNFSQPASGHWYFTLKDDRAQVRCAMFRNSNRRTTFRPQNGQQVLVRASITLYEPRGDYQLIAESMQPAGDGLLQQQFEQLKQQLAAEGLFDQSHKQPLPRPAKQVGVITSASGAALHDVLHVLQRRDPSLPVIIYPTSVQGVDAPLQIVRAIQLANLRAECDVLIVGRGGGSLEDLWSFNDERVARAIFNSHIPIVSAVGHETDVTIADFVADLRAPTPSAAAELVSRNQIELVRQIQGQQQRMEMAMDYYLAQRNQQFTRLEHRLQQQHPHLRLARQQTLLLKLQRRLEESAQTQIRLLSKRTERLQQRLQQVQPQGQIHRYNQRVQQQEYRLRQAVERQLNGYRQRFGIACSQLEAVSPLATLARGYSVTQTPAGALLKTTKQVQAGDKLTTRLQDGWVESEITQVTVAKKSRQKKVVT.

The protein belongs to the XseA family. As to quaternary structure, heterooligomer composed of large and small subunits.

Its subcellular location is the cytoplasm. The catalysed reaction is Exonucleolytic cleavage in either 5'- to 3'- or 3'- to 5'-direction to yield nucleoside 5'-phosphates.. In terms of biological role, bidirectionally degrades single-stranded DNA into large acid-insoluble oligonucleotides, which are then degraded further into small acid-soluble oligonucleotides. The sequence is that of Exodeoxyribonuclease 7 large subunit from Yersinia pseudotuberculosis serotype O:1b (strain IP 31758).